An 830-amino-acid polypeptide reads, in one-letter code: Prolactin receptor (830 aa).

The signal sequence occupies residues 1–23 (MKQKLRSSVQIILLFALTAVGLT). The Extracellular segment spans residues 24–439 (GQSYPGKPKI…QIPTDFRIKD (416 aa)). Fibronectin type-III domains are found at residues 30 to 128 (KPKI…VQPD), 129 to 228 (APVN…IPNG), 231 to 331 (PPEK…IVQT), and 333 to 434 (PPVN…IPTD). The cysteines at positions 36 and 46 are disulfide-linked. Residue N59 is glycosylated (N-linked (GlcNAc...) asparagine). The cysteines at positions 75 and 86 are disulfide-linked. N-linked (GlcNAc...) asparagine glycosylation is found at N91, N100, N112, N132, N263, N304, N316, and N336. Residues D415 and H417 each contribute to the Zn(2+) site. The WSXWS motif signature appears at 420–424 (WSEWS). Residues 440-460 (MVVWIIVGVLSSLICLVMSWT) form a helical membrane-spanning segment. Residues 461–830 (MVLKGYRMIA…DPSSFIPAFK (370 aa)) lie on the Cytoplasmic side of the membrane. A Box 1 motif motif is present at residues 472-480 (ILPPVPGPK).

It belongs to the type I cytokine receptor family. Type 1 subfamily.

It is found in the membrane. Functionally, this is a receptor for the anterior pituitary hormone prolactin. In Columba livia (Rock dove), this protein is Prolactin receptor (PRLR).